A 147-amino-acid polypeptide reads, in one-letter code: Small ribosomal subunit protein uS9 (147 aa).

The protein belongs to the universal ribosomal protein uS9 family.

This Dictyostelium discoideum (Social amoeba) protein is Small ribosomal subunit protein uS9 (rps16).